The sequence spans 927 residues: Tubulin monoglycylase TTLL3 (927 aa).

Residues 35 to 47 show a composition bias toward polar residues; that stretch reads RSQPSELRTNFSS. Disordered stretches follow at residues 35–113 and 194–227; these read RSQP…PQPV and HPPG…EENE. The segment covering 216–226 has biased composition (acidic residues); sequence DATEDEDEEEN. The TTL domain occupies 345-702; sequence VLKLVVKLEE…DRRLDRSCDT (358 aa). Residues Lys476, 482–483, 514–517, 527–529, and 571–572 each bind ATP; these read RG, QKYI, KFD, and CN. Residue Arg482 participates in a protein binding. Asp649, Glu662, and Asn664 together coordinate Mg(2+). ATP is bound at residue Glu662. Disordered stretches follow at residues 735–799 and 897–927; these read VPVG…SGKG and EEGH…KTET. The segment covering 752–769 has biased composition (polar residues); that stretch reads LTQQGSGESKDSGSPTHR. Positions 776-788 are enriched in basic and acidic residues; sequence ARAESLEHTEKPE. Over residues 916 to 927 the composition is skewed to polar residues; that stretch reads LSSTEPCSKTET.

Mg(2+) serves as cofactor. In terms of tissue distribution, highly expressed in brain and testis. Expressed in heart, kidney, liver, lung, muscle, spleen, trachea and colon. Expressed in sperm flagellum. In the brain, specifically expressed in ependymal cilia.

Its subcellular location is the cytoplasm. The protein localises to the cytoskeleton. It is found in the cell projection. It localises to the cilium. The protein resides in the cilium axoneme. Its subcellular location is the flagellum axoneme. The enzyme catalyses L-glutamyl-[protein] + glycine + ATP = glycyl-L-glutamyl-[protein] + ADP + phosphate + H(+). Functionally, monoglycylase which modifies alpha- and beta-tubulin, adding a single glycine on the gamma-carboxyl groups of specific glutamate residues to generate monoglycine side chains within the C-terminal tail of tubulin. Not involved in elongation step of the polyglycylation reaction. Preferentially glycylates a beta-tail peptide over the alpha-tail, although shifts its preference toward alpha-tail as beta-tail glutamylation increases. Competes with polyglutamylases for modification site on beta-tubulin substrate, thereby creating an anticorrelation between glycylation and glutamylation reactions. Together with TTLL8, mediates microtubule glycylation of primary and motile cilia, which is essential for their stability and maintenance. Involved in microtubule glycylation of primary cilia in colon which controls cell proliferation of epithelial cells and plays an essential role in colon cancer development. Together with TTLL8, glycylates sperm flagella which regulates axonemal dynein motor activity, thereby controlling flagellar beat, directional sperm swimming and male fertility. In Mus musculus (Mouse), this protein is Tubulin monoglycylase TTLL3.